The sequence spans 142 residues: Hemoglobin subunit alpha (142 aa).

The 141-residue stretch at 2-142 (VLSAADKTNV…VSTVLTSKYR (141 aa)) folds into the Globin domain. Ser-4 carries the post-translational modification Phosphoserine. Lys-8 carries the post-translational modification N6-succinyllysine. Thr-9 is modified (phosphothreonine). Lys-12 bears the N6-succinyllysine mark. The residue at position 17 (Lys-17) is an N6-acetyllysine; alternate. At Lys-17 the chain carries N6-succinyllysine; alternate. An N6-succinyllysine modification is found at Lys-41. Ser-50 carries the post-translational modification Phosphoserine. His-59 contributes to the O2 binding site. His-88 is a binding site for heme b. Ser-103 bears the Phosphoserine mark. Phosphothreonine is present on Thr-109. Ser-125 is modified (phosphoserine). Residues Thr-135 and Thr-138 each carry the phosphothreonine modification. Ser-139 is modified (phosphoserine).

It belongs to the globin family. As to quaternary structure, heterotetramer of two alpha chains and two beta chains. Red blood cells.

Involved in oxygen transport from the lung to the various peripheral tissues. In terms of biological role, hemopressin acts as an antagonist peptide of the cannabinoid receptor CNR1. Hemopressin-binding efficiently blocks cannabinoid receptor CNR1 and subsequent signaling. This is Hemoglobin subunit alpha (HBA) from Equus zebra (Mountain zebra).